We begin with the raw amino-acid sequence, 124 residues long: Small ribosomal subunit protein eS25 (124 aa).

A compositionally biased stretch (basic and acidic residues) spans 1 to 22; it reads MPPKDSKQKKDAGKSKKDKDPV. A disordered region spans residues 1–37; sequence MPPKDSKQKKDAGKSKKDKDPVNKSGGKAKKKKWSKG. Positions 27–37 are enriched in basic residues; sequence GKAKKKKWSKG.

Belongs to the eukaryotic ribosomal protein eS25 family. As to quaternary structure, component of the small ribosomal subunit.

The protein localises to the cytoplasm. In terms of biological role, component of the small ribosomal subunit. The ribosome is a large ribonucleoprotein complex responsible for the synthesis of proteins in the cell. This Danio rerio (Zebrafish) protein is Small ribosomal subunit protein eS25 (rps25).